A 239-amino-acid chain; its full sequence is Pyridoxine 5'-phosphate synthase (239 aa).

N7 contacts 3-amino-2-oxopropyl phosphate. 9–10 (DH) is a binding site for 1-deoxy-D-xylulose 5-phosphate. R18 contributes to the 3-amino-2-oxopropyl phosphate binding site. H43 acts as the Proton acceptor in catalysis. The 1-deoxy-D-xylulose 5-phosphate site is built by R45 and H50. E70 acts as the Proton acceptor in catalysis. T100 is a 1-deoxy-D-xylulose 5-phosphate binding site. Residue H191 is the Proton donor of the active site. 3-amino-2-oxopropyl phosphate contacts are provided by residues G192 and 213–214 (GH).

Belongs to the PNP synthase family. As to quaternary structure, homooctamer; tetramer of dimers.

The protein localises to the cytoplasm. It catalyses the reaction 3-amino-2-oxopropyl phosphate + 1-deoxy-D-xylulose 5-phosphate = pyridoxine 5'-phosphate + phosphate + 2 H2O + H(+). It participates in cofactor biosynthesis; pyridoxine 5'-phosphate biosynthesis; pyridoxine 5'-phosphate from D-erythrose 4-phosphate: step 5/5. In terms of biological role, catalyzes the complicated ring closure reaction between the two acyclic compounds 1-deoxy-D-xylulose-5-phosphate (DXP) and 3-amino-2-oxopropyl phosphate (1-amino-acetone-3-phosphate or AAP) to form pyridoxine 5'-phosphate (PNP) and inorganic phosphate. The protein is Pyridoxine 5'-phosphate synthase of Geobacter metallireducens (strain ATCC 53774 / DSM 7210 / GS-15).